The chain runs to 467 residues: Trigger factor (467 aa).

Residues 174 to 261 (SDIAILTFKG…LQDLKTRELP (88 aa)) form the PPIase FKBP-type domain. Residues 439–467 (PKKALNEKVKSSKPKNTQKKTDKTKKDSP) form a disordered region. Residues 457-467 (KKTDKTKKDSP) are compositionally biased toward basic and acidic residues.

The protein belongs to the FKBP-type PPIase family. Tig subfamily.

The protein resides in the cytoplasm. It carries out the reaction [protein]-peptidylproline (omega=180) = [protein]-peptidylproline (omega=0). Involved in protein export. Acts as a chaperone by maintaining the newly synthesized protein in an open conformation. Functions as a peptidyl-prolyl cis-trans isomerase. The protein is Trigger factor of Prochlorococcus marinus (strain SARG / CCMP1375 / SS120).